Here is a 283-residue protein sequence, read N- to C-terminus: Formamidopyrimidine-DNA glycosylase (283 aa).

Proline 2 acts as the Schiff-base intermediate with DNA in catalysis. Catalysis depends on glutamate 3, which acts as the Proton donor. Lysine 58 functions as the Proton donor; for beta-elimination activity in the catalytic mechanism. 3 residues coordinate DNA: histidine 100, arginine 119, and arginine 162. An FPG-type zinc finger spans residues 247 to 283 (DVYGREGAPCKGEGCTGQIKRIVQSGRSSFYCAQCQR). Arginine 273 functions as the Proton donor; for delta-elimination activity in the catalytic mechanism.

It belongs to the FPG family. Monomer. It depends on Zn(2+) as a cofactor.

The catalysed reaction is Hydrolysis of DNA containing ring-opened 7-methylguanine residues, releasing 2,6-diamino-4-hydroxy-5-(N-methyl)formamidopyrimidine.. It carries out the reaction 2'-deoxyribonucleotide-(2'-deoxyribose 5'-phosphate)-2'-deoxyribonucleotide-DNA = a 3'-end 2'-deoxyribonucleotide-(2,3-dehydro-2,3-deoxyribose 5'-phosphate)-DNA + a 5'-end 5'-phospho-2'-deoxyribonucleoside-DNA + H(+). In terms of biological role, involved in base excision repair of DNA damaged by oxidation or by mutagenic agents. Acts as a DNA glycosylase that recognizes and removes damaged bases. Has a preference for oxidized purines, such as 7,8-dihydro-8-oxoguanine (8-oxoG). Has AP (apurinic/apyrimidinic) lyase activity and introduces nicks in the DNA strand. Cleaves the DNA backbone by beta-delta elimination to generate a single-strand break at the site of the removed base with both 3'- and 5'-phosphates. This Roseobacter denitrificans (strain ATCC 33942 / OCh 114) (Erythrobacter sp. (strain OCh 114)) protein is Formamidopyrimidine-DNA glycosylase.